Consider the following 283-residue polypeptide: Acetylglutamate kinase (283 aa).

Substrate contacts are provided by residues 63–64 (GG), Arg-85, and Asn-178.

The protein belongs to the acetylglutamate kinase family. ArgB subfamily.

Its subcellular location is the plastid. It localises to the chloroplast. It carries out the reaction N-acetyl-L-glutamate + ATP = N-acetyl-L-glutamyl 5-phosphate + ADP. It functions in the pathway amino-acid biosynthesis; L-arginine biosynthesis; N(2)-acetyl-L-ornithine from L-glutamate: step 2/4. Functionally, catalyzes the ATP-dependent phosphorylation of N-acetyl-L-glutamate. The polypeptide is Acetylglutamate kinase (Porphyra purpurea (Red seaweed)).